The chain runs to 932 residues: ER degradation-enhancing alpha-mannosidase-like protein 3 (932 aa).

Residues 1-41 (MSEAGGRGCGSPVPQRARWRLVAATAAFCLVSATSVWTAGA) form the signal peptide. The N-linked (GlcNAc...) asparagine glycan is linked to N118. E146 serves as the catalytic Proton donor. Residue N195 is glycosylated (N-linked (GlcNAc...) asparagine). D293 is an active-site residue. The active-site Proton donor is the E387. E405 is a catalytic residue. Position 491 (T491) interacts with Ca(2+). N-linked (GlcNAc...) asparagine glycans are attached at residues N504 and N511. Positions 674 to 779 (LSKHKETRGF…KEGSIILDAI (106 aa)) constitute a PA domain. Basic and acidic residues predominate over residues 790–799 (SDKAKDRDPE). The interval 790-908 (SDKAKDRDPE…PNVSWGKKVQ (119 aa)) is disordered. N-linked (GlcNAc...) asparagine glycans are attached at residues N810 and N814. Low complexity predominate over residues 812 to 825 (SQNQSGEQISSSSQ). Residues 856–890 (ASISPSEQTSNPTENHETTNLNGECTDLDNQLQEQ) are compositionally biased toward polar residues. A glycan (N-linked (GlcNAc...) asparagine) is linked at N900. The short motif at 929–932 (KDEL) is the Prevents secretion from ER element.

This sequence belongs to the glycosyl hydrolase 47 family. The cofactor is Ca(2+).

It localises to the endoplasmic reticulum lumen. The catalysed reaction is N(4)-(alpha-D-Man-(1-&gt;2)-alpha-D-Man-(1-&gt;2)-alpha-D-Man-(1-&gt;3)-[alpha-D-Man-(1-&gt;2)-alpha-D-Man-(1-&gt;3)-[alpha-D-Man-(1-&gt;2)-alpha-D-Man-(1-&gt;6)]-alpha-D-Man-(1-&gt;6)]-beta-D-Man-(1-&gt;4)-beta-D-GlcNAc-(1-&gt;4)-beta-D-GlcNAc)-L-asparaginyl-[protein] (N-glucan mannose isomer 9A1,2,3B1,2,3) + 4 H2O = N(4)-(alpha-D-Man-(1-&gt;3)-[alpha-D-Man-(1-&gt;3)-[alpha-D-Man-(1-&gt;6)]-alpha-D-Man-(1-&gt;6)]-beta-D-Man-(1-&gt;4)-beta-D-GlcNAc-(1-&gt;4)-beta-D-GlcNAc)-L-asparaginyl-[protein] (N-glucan mannose isomer 5A1,2) + 4 beta-D-mannose. The enzyme catalyses N(4)-(alpha-D-Man-(1-&gt;2)-alpha-D-Man-(1-&gt;2)-alpha-D-Man-(1-&gt;3)-[alpha-D-Man-(1-&gt;3)-[alpha-D-Man-(1-&gt;2)-alpha-D-Man-(1-&gt;6)]-alpha-D-Man-(1-&gt;6)]-beta-D-Man-(1-&gt;4)-beta-D-GlcNAc-(1-&gt;4)-beta-D-GlcNAc)-L-asparaginyl-[protein] (N-glucan mannose isomer 8A1,2,3B1,3) + 3 H2O = N(4)-(alpha-D-Man-(1-&gt;3)-[alpha-D-Man-(1-&gt;3)-[alpha-D-Man-(1-&gt;6)]-alpha-D-Man-(1-&gt;6)]-beta-D-Man-(1-&gt;4)-beta-D-GlcNAc-(1-&gt;4)-beta-D-GlcNAc)-L-asparaginyl-[protein] (N-glucan mannose isomer 5A1,2) + 3 beta-D-mannose. It participates in protein modification; protein glycosylation. Functionally, involved in endoplasmic reticulum-associated degradation (ERAD). Accelerates the glycoprotein ERAD by proteasomes, by catalyzing mannose trimming from Man8GlcNAc2 to Man7GlcNAc2 in the N-glycans. May also participate in mannose trimming from all glycoproteins and not just misfolded ones targeted to ERAD. May have alpha 1,2-mannosidase activity. The protein is ER degradation-enhancing alpha-mannosidase-like protein 3 (EDEM3) of Homo sapiens (Human).